A 77-amino-acid polypeptide reads, in one-letter code: Small ribosomal subunit protein bS16c (77 aa).

The protein belongs to the bacterial ribosomal protein bS16 family.

The protein resides in the plastid. It is found in the cyanelle. In Cyanophora paradoxa, this protein is Small ribosomal subunit protein bS16c.